The chain runs to 282 residues: Bifunctional protein FolD (282 aa).

NADP(+) contacts are provided by residues 162-164 (GRS), Ser187, and Val228.

It belongs to the tetrahydrofolate dehydrogenase/cyclohydrolase family. Homodimer.

The catalysed reaction is (6R)-5,10-methylene-5,6,7,8-tetrahydrofolate + NADP(+) = (6R)-5,10-methenyltetrahydrofolate + NADPH. It carries out the reaction (6R)-5,10-methenyltetrahydrofolate + H2O = (6R)-10-formyltetrahydrofolate + H(+). It participates in one-carbon metabolism; tetrahydrofolate interconversion. In terms of biological role, catalyzes the oxidation of 5,10-methylenetetrahydrofolate to 5,10-methenyltetrahydrofolate and then the hydrolysis of 5,10-methenyltetrahydrofolate to 10-formyltetrahydrofolate. The chain is Bifunctional protein FolD from Thermus thermophilus (strain ATCC BAA-163 / DSM 7039 / HB27).